We begin with the raw amino-acid sequence, 139 residues long: ATP synthase epsilon chain (139 aa).

The segment at 89–110 is disordered; it reads EARAEQARAEAEARRREAQSEH.

This sequence belongs to the ATPase epsilon chain family. As to quaternary structure, F-type ATPases have 2 components, CF(1) - the catalytic core - and CF(0) - the membrane proton channel. CF(1) has five subunits: alpha(3), beta(3), gamma(1), delta(1), epsilon(1). CF(0) has three main subunits: a, b and c.

The protein resides in the cell membrane. Produces ATP from ADP in the presence of a proton gradient across the membrane. The sequence is that of ATP synthase epsilon chain from Chloroflexus aggregans (strain MD-66 / DSM 9485).